A 208-amino-acid polypeptide reads, in one-letter code: MVFDELITEFDRGLRSIAGVSRMSRPVPKPAAAAPAELSAAERKHAAGLMRVNHVGEVCAQALYQAQKLTTSSAGLKEMFEHAAREEEDHLAWTAHRLKDLDSRPSLLNPLWYAGALAIGVVAGRLGDKMSLGFMAETERQVESHLDGHLSELPAADVESRAIVEQMRADEVKHGKSATDAGGIELPMPARMLMRAASKVMTSTAYYL.

Fe cation-binding residues include glutamate 57, glutamate 87, histidine 90, glutamate 139, glutamate 171, and histidine 174.

It belongs to the COQ7 family. Fe cation serves as cofactor.

The protein localises to the cell membrane. It catalyses the reaction a 5-methoxy-2-methyl-3-(all-trans-polyprenyl)benzene-1,4-diol + AH2 + O2 = a 3-demethylubiquinol + A + H2O. The protein operates within cofactor biosynthesis; ubiquinone biosynthesis. Catalyzes the hydroxylation of 2-nonaprenyl-3-methyl-6-methoxy-1,4-benzoquinol during ubiquinone biosynthesis. The polypeptide is 3-demethoxyubiquinol 3-hydroxylase (Burkholderia pseudomallei (strain 1106a)).